The chain runs to 163 residues: N5-carboxyaminoimidazole ribonucleotide mutase (163 aa).

Residues S11, D14, and R41 each contribute to the substrate site.

Belongs to the AIR carboxylase family. Class I subfamily.

It catalyses the reaction 5-carboxyamino-1-(5-phospho-D-ribosyl)imidazole + H(+) = 5-amino-1-(5-phospho-D-ribosyl)imidazole-4-carboxylate. It functions in the pathway purine metabolism; IMP biosynthesis via de novo pathway; 5-amino-1-(5-phospho-D-ribosyl)imidazole-4-carboxylate from 5-amino-1-(5-phospho-D-ribosyl)imidazole (N5-CAIR route): step 2/2. Catalyzes the conversion of N5-carboxyaminoimidazole ribonucleotide (N5-CAIR) to 4-carboxy-5-aminoimidazole ribonucleotide (CAIR). The sequence is that of N5-carboxyaminoimidazole ribonucleotide mutase from Pseudomonas aeruginosa (strain ATCC 15692 / DSM 22644 / CIP 104116 / JCM 14847 / LMG 12228 / 1C / PRS 101 / PAO1).